The primary structure comprises 406 residues: Cysteine desulfurase IscS (406 aa).

Residues Ala-75–Thr-76, Asn-155, Gln-183, and Ser-203–His-205 contribute to the pyridoxal 5'-phosphate site. An N6-(pyridoxal phosphate)lysine modification is found at Lys-206. Residue Thr-243 participates in pyridoxal 5'-phosphate binding. The Cysteine persulfide intermediate role is filled by Cys-330. Cys-330 contacts [2Fe-2S] cluster.

The protein belongs to the class-V pyridoxal-phosphate-dependent aminotransferase family. NifS/IscS subfamily. In terms of assembly, homodimer. Forms a heterotetramer with IscU, interacts with other sulfur acceptors. Pyridoxal 5'-phosphate is required as a cofactor.

Its subcellular location is the cytoplasm. The enzyme catalyses (sulfur carrier)-H + L-cysteine = (sulfur carrier)-SH + L-alanine. Its pathway is cofactor biosynthesis; iron-sulfur cluster biosynthesis. Its function is as follows. Master enzyme that delivers sulfur to a number of partners involved in Fe-S cluster assembly, tRNA modification or cofactor biosynthesis. Catalyzes the removal of elemental sulfur atoms from cysteine to produce alanine. Functions as a sulfur delivery protein for Fe-S cluster synthesis onto IscU, an Fe-S scaffold assembly protein, as well as other S acceptor proteins. The chain is Cysteine desulfurase IscS from Haemophilus ducreyi (strain 35000HP / ATCC 700724).